The chain runs to 149 residues: 1,4-dihydroxy-2-naphthoyl-CoA hydrolase (149 aa).

Residue Asp19 is part of the active site.

This sequence belongs to the 4-hydroxybenzoyl-CoA thioesterase family. DHNA-CoA hydrolase subfamily.

The enzyme catalyses 1,4-dihydroxy-2-naphthoyl-CoA + H2O = 1,4-dihydroxy-2-naphthoate + CoA + H(+). It participates in cofactor biosynthesis; phylloquinone biosynthesis. It functions in the pathway quinol/quinone metabolism; 1,4-dihydroxy-2-naphthoate biosynthesis; 1,4-dihydroxy-2-naphthoate from chorismate: step 7/7. Functionally, catalyzes the hydrolysis of 1,4-dihydroxy-2-naphthoyl-CoA (DHNA-CoA) to 1,4-dihydroxy-2-naphthoate (DHNA), a reaction involved in phylloquinone (vitamin K1) biosynthesis. In Synechococcus sp. (strain CC9605), this protein is 1,4-dihydroxy-2-naphthoyl-CoA hydrolase.